A 280-amino-acid polypeptide reads, in one-letter code: Succinate dehydrogenase [ubiquinone] iron-sulfur subunit, mitochondrial (280 aa).

The transit peptide at 1–25 (MAAVCFSLSRCCSAVHRPAVTAVRF) directs the protein to the mitochondrion. The 2Fe-2S ferredoxin-type domain occupies 39-129 (KKFQIYRWDP…TSKVTKIYPL (91 aa)). Residues C92, C97, C100, and C112 each coordinate [2Fe-2S] cluster. One can recognise a 4Fe-4S ferredoxin-type domain in the interval 175-205 (DRQKLDGLYECILCACCSTSCPSYWWNADKY). 3 residues coordinate [4Fe-4S] cluster: C185, C188, and C191. C195 lines the [3Fe-4S] cluster pocket. W200 contacts a ubiquinone. [3Fe-4S] cluster is bound by residues C242 and C248. C252 is a binding site for [4Fe-4S] cluster.

Belongs to the succinate dehydrogenase/fumarate reductase iron-sulfur protein family. In terms of assembly, component of complex II composed of four subunits: the flavoprotein (FP) sdha, iron-sulfur protein (IP) sdhb, and a cytochrome b composed of sdhc and sdhd. Requires [2Fe-2S] cluster as cofactor. It depends on [3Fe-4S] cluster as a cofactor. The cofactor is [4Fe-4S] cluster.

The protein resides in the mitochondrion inner membrane. It carries out the reaction a quinone + succinate = fumarate + a quinol. It catalyses the reaction (R)-malate + a quinone = enol-oxaloacetate + a quinol. The catalysed reaction is (S)-malate + a quinone = enol-oxaloacetate + a quinol. Its pathway is carbohydrate metabolism; tricarboxylic acid cycle; fumarate from succinate (eukaryal route): step 1/1. Its activity is regulated as follows. Enol-oxaloacetate inhibits the succinate dehydrogenase activity. In terms of biological role, iron-sulfur protein (IP) subunit of the succinate dehydrogenase complex (mitochondrial respiratory chain complex II), responsible for transferring electrons from succinate to ubiquinone (coenzyme Q). SDH also oxidizes malate to the non-canonical enol form of oxaloacetate, enol-oxaloacetate. Enol-oxaloacetate, which is a potent inhibitor of the succinate dehydrogenase activity, is further isomerized into keto-oxaloacetate. The polypeptide is Succinate dehydrogenase [ubiquinone] iron-sulfur subunit, mitochondrial (sdhb) (Danio rerio (Zebrafish)).